We begin with the raw amino-acid sequence, 414 residues long: 3-phosphoshikimate 1-carboxyvinyltransferase (414 aa).

Lys20, Ser21, and Arg25 together coordinate 3-phosphoshikimate. Lys20 provides a ligand contact to phosphoenolpyruvate. Arg113 provides a ligand contact to phosphoenolpyruvate. Residues Ser154, Ser155, Gln156, Ser181, Asp296, and Lys323 each contribute to the 3-phosphoshikimate site. Gln156 is a binding site for phosphoenolpyruvate. Asp296 (proton acceptor) is an active-site residue. 3 residues coordinate phosphoenolpyruvate: Arg327, Arg371, and Lys395.

This sequence belongs to the EPSP synthase family. As to quaternary structure, monomer.

The protein resides in the cytoplasm. The catalysed reaction is 3-phosphoshikimate + phosphoenolpyruvate = 5-O-(1-carboxyvinyl)-3-phosphoshikimate + phosphate. Its pathway is metabolic intermediate biosynthesis; chorismate biosynthesis. Catalyzes the transfer of the enolpyruvyl moiety of phosphoenolpyruvate (PEP) to the 5-hydroxyl of shikimate-3-phosphate (S3P) to produce enolpyruvyl shikimate-3-phosphate and inorganic phosphate. The chain is 3-phosphoshikimate 1-carboxyvinyltransferase from Saccharolobus solfataricus (strain ATCC 35092 / DSM 1617 / JCM 11322 / P2) (Sulfolobus solfataricus).